We begin with the raw amino-acid sequence, 506 residues long: Anaerobic nitric oxide reductase transcription regulator NorR (506 aa).

Asp-57 is subject to 4-aspartylphosphate. Positions 187–416 (MIGLSPNMMQ…LEHAIHRAVV (230 aa)) constitute a Sigma-54 factor interaction domain. ATP-binding positions include 215–222 (GETGTGKE) and 278–287 (ADNGTLFLDE). The segment at residues 481–500 (WAACARALETDVANLHRLAK) is a DNA-binding region (H-T-H motif).

The protein operates within nitrogen metabolism; nitric oxide reduction. Required for the expression of anaerobic nitric oxide (NO) reductase, acts as a transcriptional activator for at least the norVW operon. Activation also requires sigma-54. The sequence is that of Anaerobic nitric oxide reductase transcription regulator NorR from Citrobacter koseri (strain ATCC BAA-895 / CDC 4225-83 / SGSC4696).